Reading from the N-terminus, the 261-residue chain is Small ribosomal subunit protein uS2 (261 aa).

S2 carries the N-acetylserine modification. The segment at 215-261 (AEEAKTTEDVEEAAPVDADEWTGETEEVDWAESGATPAVEDAAASNW) is disordered. Over residues 223–244 (DVEEAAPVDADEWTGETEEVDW) the composition is skewed to acidic residues.

It belongs to the universal ribosomal protein uS2 family. In terms of assembly, component of the small ribosomal subunit. Mature ribosomes consist of a small (40S) and a large (60S) subunit. The 40S subunit contains about 33 different proteins and 1 molecule of RNA (18S). The 60S subunit contains about 49 different proteins and 3 molecules of RNA (25S, 5.8S and 5S). Interacts with RPS21.

The protein resides in the cytoplasm. In terms of biological role, required for the assembly and/or stability of the 40S ribosomal subunit. Required for the processing of the 20S rRNA-precursor to mature 18S rRNA in a late step of the maturation of 40S ribosomal subunits. This chain is Small ribosomal subunit protein uS2, found in Scheffersomyces stipitis (strain ATCC 58785 / CBS 6054 / NBRC 10063 / NRRL Y-11545) (Yeast).